The sequence spans 1163 residues: DNA-directed RNA polymerase subunit beta' (1163 aa).

C59, C61, C74, and C77 together coordinate Zn(2+). Mg(2+)-binding residues include D449, D451, and D453. Residues C794, C868, C875, and C878 each contribute to the Zn(2+) site.

The protein belongs to the RNA polymerase beta' chain family. As to quaternary structure, the RNAP catalytic core consists of 2 alpha, 1 beta, 1 beta' and 1 omega subunit. When a sigma factor is associated with the core the holoenzyme is formed, which can initiate transcription. It depends on Mg(2+) as a cofactor. Requires Zn(2+) as cofactor.

The catalysed reaction is RNA(n) + a ribonucleoside 5'-triphosphate = RNA(n+1) + diphosphate. Functionally, DNA-dependent RNA polymerase catalyzes the transcription of DNA into RNA using the four ribonucleoside triphosphates as substrates. The protein is DNA-directed RNA polymerase subunit beta' of Caldicellulosiruptor saccharolyticus (strain ATCC 43494 / DSM 8903 / Tp8T 6331).